The chain runs to 162 residues: Large ribosomal subunit protein uL10 (162 aa).

It belongs to the universal ribosomal protein uL10 family. As to quaternary structure, part of the ribosomal stalk of the 50S ribosomal subunit. The N-terminus interacts with L11 and the large rRNA to form the base of the stalk. The C-terminus forms an elongated spine to which L12 dimers bind in a sequential fashion forming a multimeric L10(L12)X complex.

In terms of biological role, forms part of the ribosomal stalk, playing a central role in the interaction of the ribosome with GTP-bound translation factors. This Vibrio parahaemolyticus serotype O3:K6 (strain RIMD 2210633) protein is Large ribosomal subunit protein uL10.